The following is a 607-amino-acid chain: Thymidine kinase (607 aa).

Disordered stretches follow at residues 1–160 and 180–215; these read MAGF…ADST and DDKSDCESEDESNFRRPSSHSALKQKNGGKGKPSGL. Basic and acidic residues predominate over residues 17-32; it reads KCQEDESPENERHENF. Composition is skewed to polar residues over residues 88–106, 148–160, and 194–203; these read AAVTSNTGNSPGSRHTSCP, RKTSCTEGGADST, and RRPSSHSALK. Residue 291-298 participates in ATP binding; sequence GAPGVGKT. Glutamate 317 acts as the Proton acceptor in catalysis. Residue glutamine 355 participates in substrate binding. Arginine 445 provides a ligand contact to ATP. Arginine 451 serves as a coordination point for substrate.

Belongs to the herpesviridae thymidine kinase family. As to quaternary structure, homodimer.

The protein localises to the virion tegument. Its subcellular location is the host nucleus. It catalyses the reaction thymidine + ATP = dTMP + ADP + H(+). In terms of biological role, catalyzes the transfer of the gamma-phospho group of ATP to thymidine to generate dTMP in the salvage pathway of pyrimidine synthesis. The dTMP serves as a substrate for DNA polymerase during viral DNA replication. Allows the virus to be reactivated and to grow in non-proliferative cells lacking a high concentration of phosphorylated nucleic acid precursors. This chain is Thymidine kinase, found in Epstein-Barr virus (strain AG876) (HHV-4).